Here is a 496-residue protein sequence, read N- to C-terminus: Probable cytosol aminopeptidase (496 aa).

The Mn(2+) site is built by Lys-266 and Asp-271. Lys-278 is a catalytic residue. Positions 289, 348, and 350 each coordinate Mn(2+). Arg-352 is a catalytic residue.

It belongs to the peptidase M17 family. It depends on Mn(2+) as a cofactor.

Its subcellular location is the cytoplasm. The enzyme catalyses Release of an N-terminal amino acid, Xaa-|-Yaa-, in which Xaa is preferably Leu, but may be other amino acids including Pro although not Arg or Lys, and Yaa may be Pro. Amino acid amides and methyl esters are also readily hydrolyzed, but rates on arylamides are exceedingly low.. It carries out the reaction Release of an N-terminal amino acid, preferentially leucine, but not glutamic or aspartic acids.. In terms of biological role, presumably involved in the processing and regular turnover of intracellular proteins. Catalyzes the removal of unsubstituted N-terminal amino acids from various peptides. In Pseudomonas fluorescens (strain Pf0-1), this protein is Probable cytosol aminopeptidase.